A 105-amino-acid polypeptide reads, in one-letter code: Protein U4 (105 aa).

A helical membrane pass occupies residues 5–25 (FLLFLLLLVLVINPSLVVNMV).

The protein belongs to the nanovirus U4 protein family.

Its subcellular location is the membrane. The sequence is that of Protein U4 (DNA-U4) from Faba bean necrotic yellows virus (isolate Egyptian EV1-93) (FBNYV).